Consider the following 322-residue polypeptide: Ferredoxin--NADP reductase (322 aa).

4 residues coordinate FAD: L87, F119, D279, and T320.

The protein belongs to the ferredoxin--NADP reductase type 2 family. As to quaternary structure, homodimer. FAD is required as a cofactor.

The catalysed reaction is 2 reduced [2Fe-2S]-[ferredoxin] + NADP(+) + H(+) = 2 oxidized [2Fe-2S]-[ferredoxin] + NADPH. The chain is Ferredoxin--NADP reductase from Streptococcus suis (strain 98HAH33).